Here is a 156-residue protein sequence, read N- to C-terminus: Transmembrane inner ear expressed protein (156 aa).

An N-terminal signal peptide occupies residues 1–27 (MAGWPGAGPLCVLGGAALGVCLAGVAG). Residues 28–57 (QLVEPSTAPPKPKPPPLTKETVVFWDMRLW) lie on the Extracellular side of the membrane. The chain crosses the membrane as a helical span at residues 58–78 (HVVGIFSLFVLSIIITLCCVF). Residues 79–156 (NCRVPRTRKE…NEAKKKKGEK (78 aa)) are Cytoplasmic-facing. A disordered region spans residues 113–135 (NELTEVPGEDKKKKKKKKKDSVD).

Forms the MET channel composed of TMC (TMC1 or TMC2), TMIE, TOMT, CIB (CIB2 or CIB3), LHPL5 and PCDH15. In terms of tissue distribution, expressed in many tissues.

Its subcellular location is the membrane. In terms of biological role, auxiliary subunit of the mechanotransducer (MET) non-specific cation channel complex located at the tips of stereocilia of cochlear hair cells and that mediates sensory transduction in the auditory system. The MET complex is composed of two dimeric pore-forming ion-conducting transmembrane TMC (TMC1 or TMC2) subunits, and aided by several auxiliary proteins including LHFPL5, TMIE, CIB2/3 and TOMT, and the tip-link PCDH15. May contribute to the formation of the pore. In Homo sapiens (Human), this protein is Transmembrane inner ear expressed protein (TMIE).